Consider the following 291-residue polypeptide: Formamidopyrimidine-DNA glycosylase (291 aa).

Pro2 functions as the Schiff-base intermediate with DNA in the catalytic mechanism. The active-site Proton donor is the Glu3. The active-site Proton donor; for beta-elimination activity is Lys58. His104, Arg127, and Arg172 together coordinate DNA. The FPG-type zinc-finger motif lies at Phe257–Arg291. Arg281 serves as the catalytic Proton donor; for delta-elimination activity.

It belongs to the FPG family. In terms of assembly, monomer. Requires Zn(2+) as cofactor.

It catalyses the reaction Hydrolysis of DNA containing ring-opened 7-methylguanine residues, releasing 2,6-diamino-4-hydroxy-5-(N-methyl)formamidopyrimidine.. It carries out the reaction 2'-deoxyribonucleotide-(2'-deoxyribose 5'-phosphate)-2'-deoxyribonucleotide-DNA = a 3'-end 2'-deoxyribonucleotide-(2,3-dehydro-2,3-deoxyribose 5'-phosphate)-DNA + a 5'-end 5'-phospho-2'-deoxyribonucleoside-DNA + H(+). In terms of biological role, involved in base excision repair of DNA damaged by oxidation or by mutagenic agents. Acts as a DNA glycosylase that recognizes and removes damaged bases. Has a preference for oxidized purines, such as 7,8-dihydro-8-oxoguanine (8-oxoG). Has AP (apurinic/apyrimidinic) lyase activity and introduces nicks in the DNA strand. Cleaves the DNA backbone by beta-delta elimination to generate a single-strand break at the site of the removed base with both 3'- and 5'-phosphates. The polypeptide is Formamidopyrimidine-DNA glycosylase (Ralstonia pickettii (strain 12J)).